The primary structure comprises 125 residues: Small ribosomal subunit protein uS13 (125 aa).

Residues 99–125 (RGQRTKTNARTRKGKRKTVANKKMAAK) are disordered.

Belongs to the universal ribosomal protein uS13 family. Part of the 30S ribosomal subunit. Forms a loose heterodimer with protein S19. Forms two bridges to the 50S subunit in the 70S ribosome.

Functionally, located at the top of the head of the 30S subunit, it contacts several helices of the 16S rRNA. In the 70S ribosome it contacts the 23S rRNA (bridge B1a) and protein L5 of the 50S subunit (bridge B1b), connecting the 2 subunits; these bridges are implicated in subunit movement. Contacts the tRNAs in the A and P-sites. This chain is Small ribosomal subunit protein uS13, found in Borrelia turicatae (strain 91E135).